A 197-amino-acid chain; its full sequence is dITP/XTP pyrophosphatase (197 aa).

9-14 (SNNAGK) contacts substrate. Asp-70 serves as the catalytic Proton acceptor. Asp-70 is a binding site for Mg(2+). Residues Ser-71, 153–156 (FGYD), Lys-176, and 181–182 (HR) contribute to the substrate site.

This sequence belongs to the HAM1 NTPase family. As to quaternary structure, homodimer. Mg(2+) serves as cofactor.

The enzyme catalyses XTP + H2O = XMP + diphosphate + H(+). It catalyses the reaction dITP + H2O = dIMP + diphosphate + H(+). The catalysed reaction is ITP + H2O = IMP + diphosphate + H(+). Pyrophosphatase that catalyzes the hydrolysis of nucleoside triphosphates to their monophosphate derivatives, with a high preference for the non-canonical purine nucleotides XTP (xanthosine triphosphate), dITP (deoxyinosine triphosphate) and ITP. Seems to function as a house-cleaning enzyme that removes non-canonical purine nucleotides from the nucleotide pool, thus preventing their incorporation into DNA/RNA and avoiding chromosomal lesions. In Chromobacterium violaceum (strain ATCC 12472 / DSM 30191 / JCM 1249 / CCUG 213 / NBRC 12614 / NCIMB 9131 / NCTC 9757 / MK), this protein is dITP/XTP pyrophosphatase.